The primary structure comprises 409 residues: Nucleoprotein (409 aa).

4 disordered regions span residues 1 to 32 (MASGKAAGKSDAPTPIIKLGGPKPPKIGSSGN), 47 to 84 (PQPKFEGSGVPDNNNIKPSQQHGYWRRQARYKPGKSGR), 121 to 145 (ADTKSRSNQGTRDPDKFDQYPLRFS), and 164 to 194 (RSGRSTAASSAASSRAPSREGSRGRRSGAED). The segment at 29 to 160 (SSGNASWFQA…GNFRWDFIPL (132 aa)) is RNA-binding. Positions 31 to 156 (GNASWFQAIK…GGPDGNFRWD (126 aa)) constitute a CoV N NTD domain. A compositionally biased stretch (polar residues) spans 57–68 (PDNNNIKPSQQH). Residues 70–84 (YWRRQARYKPGKSGR) show a composition bias toward basic residues. Over residues 164–179 (RSGRSTAASSAASSRA) the composition is skewed to low complexity. Positions 180-192 (PSREGSRGRRSGA) are enriched in basic and acidic residues. Phosphoserine; by host is present on serine 190. Positions 215–331 (TKAKADEMAH…QCVDGVGTRP (117 aa)) constitute a CoV N CTD domain. The dimerization stretch occupies residues 226–333 (RYCKRTIPPG…VDGVGTRPKD (108 aa)). Residues cysteine 320 and cysteine 323 are joined by a disulfide bond. The interval 326–409 (GVGTRPKDDE…GDSALGENEL (84 aa)) is disordered. The segment covering 358–367 (QRPKKEKKPK) has biased composition (basic residues). Basic and acidic residues predominate over residues 368-384 (KQDDEVDKALTSDEERN). Threonine 378 bears the Phosphothreonine; by host mark. Serine 379 bears the Phosphoserine; by host mark.

It belongs to the gammacoronavirus nucleocapsid protein family. In terms of assembly, homooligomer. Both monomeric and oligomeric forms interact with RNA. Interacts with protein M. Interacts with NSP3; this interaction serves to tether the genome to the newly translated replicase-transcriptase complex at a very early stage of infection. Post-translationally, ADP-ribosylated. The ADP-ribosylation is retained in the virion during infection. In terms of processing, phosphorylated on serine and threonine residues.

The protein resides in the virion. It is found in the host endoplasmic reticulum-Golgi intermediate compartment. The protein localises to the host Golgi apparatus. Its function is as follows. Packages the positive strand viral genome RNA into a helical ribonucleocapsid (RNP) and plays a fundamental role during virion assembly through its interactions with the viral genome and membrane protein M. Plays an important role in enhancing the efficiency of subgenomic viral RNA transcription as well as viral replication. In Gallus gallus (Chicken), this protein is Nucleoprotein.